The primary structure comprises 115 residues: Small ribosomal subunit protein uS13 (115 aa).

The segment at 92-115 is disordered; it reads RRGLPVRGQNTKNNARTRKGSKRK. The segment covering 106-115 has biased composition (basic residues); the sequence is ARTRKGSKRK.

The protein belongs to the universal ribosomal protein uS13 family. Part of the 30S ribosomal subunit. Forms a loose heterodimer with protein S19. Forms two bridges to the 50S subunit in the 70S ribosome.

Its function is as follows. Located at the top of the head of the 30S subunit, it contacts several helices of the 16S rRNA. In the 70S ribosome it contacts the 23S rRNA (bridge B1a) and protein L5 of the 50S subunit (bridge B1b), connecting the 2 subunits; these bridges are implicated in subunit movement. Contacts the tRNAs in the A and P-sites. This Lactobacillus gasseri (strain ATCC 33323 / DSM 20243 / BCRC 14619 / CIP 102991 / JCM 1131 / KCTC 3163 / NCIMB 11718 / NCTC 13722 / AM63) protein is Small ribosomal subunit protein uS13.